The chain runs to 203 residues: Pyridoxal 5'-phosphate synthase subunit PdxT (203 aa).

54 to 56 serves as a coordination point for L-glutamine; the sequence is GES. C86 acts as the Nucleophile in catalysis. Residues R113 and 141–142 contribute to the L-glutamine site; that span reads IR. Catalysis depends on charge relay system residues H177 and E179.

Belongs to the glutaminase PdxT/SNO family. In terms of assembly, in the presence of PdxS, forms a dodecamer of heterodimers. Only shows activity in the heterodimer.

The catalysed reaction is aldehydo-D-ribose 5-phosphate + D-glyceraldehyde 3-phosphate + L-glutamine = pyridoxal 5'-phosphate + L-glutamate + phosphate + 3 H2O + H(+). The enzyme catalyses L-glutamine + H2O = L-glutamate + NH4(+). Its pathway is cofactor biosynthesis; pyridoxal 5'-phosphate biosynthesis. Catalyzes the hydrolysis of glutamine to glutamate and ammonia as part of the biosynthesis of pyridoxal 5'-phosphate. The resulting ammonia molecule is channeled to the active site of PdxS. This chain is Pyridoxal 5'-phosphate synthase subunit PdxT, found in Halobacterium salinarum (strain ATCC 29341 / DSM 671 / R1).